A 219-amino-acid polypeptide reads, in one-letter code: MAESLRSPRRSLYKLVGSPPWKEAFRQRCLERMRNSRDRLLNRYRQAGSSGPGNSQNSFLVQEVMEEEWNALQSVENCPEDLAQLEELIDMAVLEEIQQELINQEQSIISEYEKSLQFDEKCLSIMLAEWEANPLICPVCTKYNLRITSGVVVCQCGLSIPSHSSELTEQKLRACLEGSINEHSAHCPHTPEFSVTGGTEEKSSLLMSCLACDTWAVIL.

Residue serine 18 is modified to Phosphoserine. A Glycyl lysine isopeptide (Lys-Gly) (interchain with G-Cter in SUMO); in isoform 2 cross-link involves residue lysine 121. The RIP-type zinc finger occupies 137-212; sequence CPVCTKYNLR…SSLLMSCLAC (76 aa). Residues 164–180 are mediates nuclear export; that stretch reads SSELTEQKLRACLEGSI.

In terms of assembly, interacts with the RPA1 subunit of RPA complex. In terms of processing, sumoylated. Sumoylation is required for localization in the nuclear PML body and transport of RPA complex in PML body. Upon UV irradiation and during S phase, it is desumoylated, releasing RPA complex that is translocated to sites of DNA damage. Sumoylation takes place at different Lys residues. Variant 'Lys-103' adds a sumoylation site and increases total sumoylation levels. As to expression, widely expressed. Expressed in pancreas, kidney, muscle, liver, lung, placenta, brain, heart, leukocytes, colon, intestine, ovary, testis, prostate, thymus and spleen.

It is found in the cytoplasm. The protein resides in the nucleus. Its subcellular location is the PML body. Its function is as follows. Mediates the import of RPA complex into the nucleus, possibly via some interaction with importin beta. Isoform 2 is sumoylated and mediates the localization of RPA complex into the PML body of the nucleus, thereby participating in RPA function in DNA metabolism. This chain is RPA-interacting protein (RPAIN), found in Homo sapiens (Human).